The following is a 417-amino-acid chain: Xylulose 5-phosphate/phosphate translocator, chloroplastic (417 aa).

A chloroplast-targeting transit peptide spans 1–82; the sequence is MISLNLSPSL…GFSRKPRSIA (82 aa). The segment at 66–102 is disordered; it reads TNPESSSGFSRKPRSIAAVGSSDSNPDEKSDLGEAEK. A83 carries the N-acetylalanine modification. Positions 91-102 are enriched in basic and acidic residues; sequence PDEKSDLGEAEK. 9 helical membrane-spanning segments follow: residues 109–129, 141–161, 173–193, 198–218, 225–245, 247–267, 287–307, 318–338, and 384–404; these read TLQL…FNIF, WLLA…LWSF, FIIA…SACV, VAVS…VIFS, YPLA…LAAV, EVSF…GFVL, LYGC…IFVE, AIAS…SGVF, and LNAL…QATA. Residues 127–243 form the EamA domain; it reads NIFNKKALNV…LPIVMGCSLA (117 aa).

It belongs to the TPT transporter family. TPT (TC 2.A.7.9) subfamily. In terms of tissue distribution, widely expressed.

Its subcellular location is the plastid. It is found in the chloroplast membrane. Its function is as follows. Sugar phosphate/phosphate translocator that transports inorganic phosphate, triose phosphate, 3-phosphoglycerate, xylulose 5-phosphate (Xul-5-P) and to a lesser extent ribulose 5-phosphate. Does not transport ribose 5-phosphate or hexose phosphates. Provides cytosolic Xul-5-P to the chloroplast, where it is used as an intermediate in the plastidic pentose phosphate pathways. The chain is Xylulose 5-phosphate/phosphate translocator, chloroplastic (XPT) from Arabidopsis thaliana (Mouse-ear cress).